The primary structure comprises 330 residues: ADP-L-glycero-D-manno-heptose-6-epimerase (330 aa).

NADP(+)-binding positions include 11-12, 32-33, Lys39, Lys54, 75-79, and Asn92; these read FI, DN, and EGACS. The active-site Proton acceptor is Tyr139. Lys143 contacts NADP(+). Residue Asn168 coordinates substrate. Residues Val169 and Lys177 each contribute to the NADP(+) site. Lys177 functions as the Proton acceptor in the catalytic mechanism. Substrate is bound by residues Arg179, His186, 200 to 203, Arg213, and Tyr292; that span reads FGEY.

This sequence belongs to the NAD(P)-dependent epimerase/dehydratase family. HldD subfamily. As to quaternary structure, homopentamer. It depends on NADP(+) as a cofactor.

It carries out the reaction ADP-D-glycero-beta-D-manno-heptose = ADP-L-glycero-beta-D-manno-heptose. It functions in the pathway nucleotide-sugar biosynthesis; ADP-L-glycero-beta-D-manno-heptose biosynthesis; ADP-L-glycero-beta-D-manno-heptose from D-glycero-beta-D-manno-heptose 7-phosphate: step 4/4. Functionally, catalyzes the interconversion between ADP-D-glycero-beta-D-manno-heptose and ADP-L-glycero-beta-D-manno-heptose via an epimerization at carbon 6 of the heptose. This chain is ADP-L-glycero-D-manno-heptose-6-epimerase, found in Burkholderia thailandensis (strain ATCC 700388 / DSM 13276 / CCUG 48851 / CIP 106301 / E264).